We begin with the raw amino-acid sequence, 600 residues long: Elongation factor 4 (600 aa).

A tr-type G domain is found at 5–187 (SRIRNFSIIA…DLIKKIPPPK (183 aa)). Residues 17 to 22 (DHGKST) and 134 to 137 (NKMD) contribute to the GTP site.

It belongs to the TRAFAC class translation factor GTPase superfamily. Classic translation factor GTPase family. LepA subfamily.

It is found in the cell inner membrane. The catalysed reaction is GTP + H2O = GDP + phosphate + H(+). Its function is as follows. Required for accurate and efficient protein synthesis under certain stress conditions. May act as a fidelity factor of the translation reaction, by catalyzing a one-codon backward translocation of tRNAs on improperly translocated ribosomes. Back-translocation proceeds from a post-translocation (POST) complex to a pre-translocation (PRE) complex, thus giving elongation factor G a second chance to translocate the tRNAs correctly. Binds to ribosomes in a GTP-dependent manner. This Marinobacter nauticus (strain ATCC 700491 / DSM 11845 / VT8) (Marinobacter aquaeolei) protein is Elongation factor 4.